The following is a 478-amino-acid chain: Sodium-coupled neutral amino acid transporter 5 (478 aa).

Positions M1–L20 are disordered. Residues M1 to G57 are Cytoplasmic-facing. The helical transmembrane segment at M58–A80 threads the bilayer. Residues H81–C93 lie on the Extracellular side of the membrane. A helical transmembrane segment spans residues I94–I114. Residues R115 to V131 lie on the Cytoplasmic side of the membrane. Residues V132–I152 traverse the membrane as a helical segment. The Extracellular portion of the chain corresponds to K153–W172. Residues F173 to L193 form a helical membrane-spanning segment. Over M194 to G198 the chain is Cytoplasmic. Residues Y199–I219 traverse the membrane as a helical segment. Topologically, residues Y220–Q263 are extracellular. Cysteines 227 and 253 form a disulfide. N232 carries an N-linked (GlcNAc...) asparagine glycan. A helical transmembrane segment spans residues M264–I284. Residues Y285–N301 are Cytoplasmic-facing. The helical transmembrane segment at V302–F322 threads the bilayer. The Extracellular segment spans residues Y323–L340. Residues I341 to F361 form a helical membrane-spanning segment. The Cytoplasmic portion of the chain corresponds to P362 to H382. A helical transmembrane segment spans residues V383–I403. Residues R404–D405 are Extracellular-facing. A helical membrane pass occupies residues I406–F426. At Y427 to Q445 the chain is on the cytoplasmic side. Residues A446–A466 form a helical membrane-spanning segment. Residues N467–H478 lie on the Extracellular side of the membrane.

It belongs to the amino acid/polyamine transporter 2 family.

Its subcellular location is the cell membrane. The catalysed reaction is L-serine(out) + Na(+)(out) + H(+)(in) = L-serine(in) + Na(+)(in) + H(+)(out). The enzyme catalyses L-alanine(out) + Na(+)(out) + H(+)(in) = L-alanine(in) + Na(+)(in) + H(+)(out). It catalyses the reaction glycine(out) + Na(+)(out) + H(+)(in) = glycine(in) + Na(+)(in) + H(+)(out). It carries out the reaction L-glutamine(out) + Na(+)(out) + H(+)(in) = L-glutamine(in) + Na(+)(in) + H(+)(out). The catalysed reaction is L-asparagine(out) + Na(+)(out) + H(+)(in) = L-asparagine(in) + Na(+)(in) + H(+)(out). The enzyme catalyses L-histidine(out) + Na(+)(out) + H(+)(in) = L-histidine(in) + Na(+)(in) + H(+)(out). It catalyses the reaction L-cysteine(out) + Na(+)(out) + H(+)(in) = L-cysteine(in) + Na(+)(in) + H(+)(out). Not inhibited by lithium. Partial allosteric regulation on ions sodium binding. Functionally, symporter that cotransports neutral amino acids and sodium ions, coupled to an H(+) antiporter activity. Releases L-glutamine and glycine from astroglial cells and may participate in the glutamate/GABA-glutamine cycle and the NMDA receptors activation. In addition contributes significantly to L-glutamine uptake in retina, namely in ganglion and Mueller cells and, therefore participates in the retinal glutamate-glutamine cycle. The transport activity is pH sensitive, Li(+) tolerant, bidirectional and associated with large uncoupled fluxes of protons. The transport is electroneutral coupled to the cotransport of 1 Na(+) and the antiport of 1 H(+). May have particular importance for modulation of net hepatic glutamine flux. This is Sodium-coupled neutral amino acid transporter 5 from Bos taurus (Bovine).